We begin with the raw amino-acid sequence, 277 residues long: Energy-coupling factor transporter ATP-binding protein EcfA1 (277 aa).

In terms of domain architecture, ABC transporter spans 5 to 240 (LEVENLVFKY…SEDMVEIGLD (236 aa)). 40–47 (GQNGSGKS) is a binding site for ATP. Glutamate 166 (proton acceptor) is an active-site residue.

The protein belongs to the ABC transporter superfamily. Energy-coupling factor EcfA family. As to quaternary structure, forms a stable energy-coupling factor (ECF) transporter complex composed of 2 membrane-embedded substrate-binding proteins (S component), 2 ATP-binding proteins (A component) and 2 transmembrane proteins (T component). In L.lactis forms a stable complex with EcfA' and EcfT and substrate-binding components. In E.coli forms a stable complex with EcfA', EcfT and individually with 3 tested substrate-binding components (BioY, NiaX and ThiT) with a stoichiometry of 1.1:1:1. The core ECF complex interacts with a number of substrate-specific binding components, including BioY, BioY2, HmpT, NiaX, PanT, QueT, RibU and ThiT.

The protein resides in the cell membrane. ATP-binding (A) component of a common energy-coupling factor (ECF) ABC-transporter complex. Unlike classic ABC transporters this ECF transporter provides the energy necessary to transport a number of different substrates. In this organism these probably include biotin, thiamine precursor, niacin, pantothenic acid, queuosine precursor, riboflavin and thiamine. Uptake of niacin or riboflavin into proteosomes containing EcfA1A2T and Niax or RibU has been demonstrated. Uptake requires hydrolyzable Mg-ATP and is substrate-specific; NiaX-containing proteosomes did not transport riboflavin. The protein is Energy-coupling factor transporter ATP-binding protein EcfA1 of Lactococcus lactis subsp. cremoris (strain MG1363).